The chain runs to 233 residues: Fibrillarin-like rRNA/tRNA 2'-O-methyltransferase (233 aa).

Residues 89 to 90 (TT), 108 to 109 (EF), 133 to 134 (DA), and 153 to 156 (DIAQ) each bind S-adenosyl-L-methionine.

It belongs to the methyltransferase superfamily. Fibrillarin family. In terms of assembly, interacts with nop5. Component of box C/D small ribonucleoprotein (sRNP) particles that contain rpl7ae, FlpA and nop5, plus a guide RNA.

Involved in pre-rRNA and tRNA processing. Utilizes the methyl donor S-adenosyl-L-methionine to catalyze the site-specific 2'-hydroxyl methylation of ribose moieties in rRNA and tRNA. Site specificity is provided by a guide RNA that base pairs with the substrate. Methylation occurs at a characteristic distance from the sequence involved in base pairing with the guide RNA. The protein is Fibrillarin-like rRNA/tRNA 2'-O-methyltransferase of Sulfurisphaera tokodaii (strain DSM 16993 / JCM 10545 / NBRC 100140 / 7) (Sulfolobus tokodaii).